The sequence spans 152 residues: UPF0225 protein YchJ (152 aa).

This sequence belongs to the UPF0225 family.

This Escherichia coli O127:H6 (strain E2348/69 / EPEC) protein is UPF0225 protein YchJ.